The following is a 245-amino-acid chain: 1-(5-phosphoribosyl)-5-[(5-phosphoribosylamino)methylideneamino] imidazole-4-carboxamide isomerase (245 aa).

Residue D8 is the Proton acceptor of the active site. Residue D130 is the Proton donor of the active site.

The protein belongs to the HisA/HisF family.

Its subcellular location is the cytoplasm. It carries out the reaction 1-(5-phospho-beta-D-ribosyl)-5-[(5-phospho-beta-D-ribosylamino)methylideneamino]imidazole-4-carboxamide = 5-[(5-phospho-1-deoxy-D-ribulos-1-ylimino)methylamino]-1-(5-phospho-beta-D-ribosyl)imidazole-4-carboxamide. The protein operates within amino-acid biosynthesis; L-histidine biosynthesis; L-histidine from 5-phospho-alpha-D-ribose 1-diphosphate: step 4/9. The sequence is that of 1-(5-phosphoribosyl)-5-[(5-phosphoribosylamino)methylideneamino] imidazole-4-carboxamide isomerase from Pseudomonas entomophila (strain L48).